A 381-amino-acid chain; its full sequence is Succinate--CoA ligase [ADP-forming] subunit beta (381 aa).

One can recognise an ATP-grasp domain in the interval K9 to K236. Residues K45, G52–G54, E91, V94, and E99 contribute to the ATP site. Mg(2+) is bound by residues N191 and D205. Substrate contacts are provided by residues N256 and G313 to T315.

The protein belongs to the succinate/malate CoA ligase beta subunit family. In terms of assembly, heterotetramer of two alpha and two beta subunits. It depends on Mg(2+) as a cofactor.

It carries out the reaction succinate + ATP + CoA = succinyl-CoA + ADP + phosphate. The catalysed reaction is GTP + succinate + CoA = succinyl-CoA + GDP + phosphate. It functions in the pathway carbohydrate metabolism; tricarboxylic acid cycle; succinate from succinyl-CoA (ligase route): step 1/1. Its function is as follows. Succinyl-CoA synthetase functions in the citric acid cycle (TCA), coupling the hydrolysis of succinyl-CoA to the synthesis of either ATP or GTP and thus represents the only step of substrate-level phosphorylation in the TCA. The beta subunit provides nucleotide specificity of the enzyme and binds the substrate succinate, while the binding sites for coenzyme A and phosphate are found in the alpha subunit. This Halorubrum lacusprofundi (strain ATCC 49239 / DSM 5036 / JCM 8891 / ACAM 34) protein is Succinate--CoA ligase [ADP-forming] subunit beta.